Consider the following 428-residue polypeptide: Adenylosuccinate synthetase (428 aa).

GTP-binding positions include 12-18 (GDEGKGK) and 40-42 (GHT). Asp13 (proton acceptor) is an active-site residue. Residues Asp13 and Gly40 each coordinate Mg(2+). Residues 13 to 16 (DEGK), 38 to 41 (NAGH), Thr129, Arg143, Gln224, Thr239, and Arg303 contribute to the IMP site. The active-site Proton donor is His41. 299–305 (VTTGRSR) is a substrate binding site. GTP is bound by residues Arg305, 331-333 (KLD), and 413-415 (GVG).

Belongs to the adenylosuccinate synthetase family. In terms of assembly, homodimer. Mg(2+) serves as cofactor.

Its subcellular location is the cytoplasm. The enzyme catalyses IMP + L-aspartate + GTP = N(6)-(1,2-dicarboxyethyl)-AMP + GDP + phosphate + 2 H(+). It participates in purine metabolism; AMP biosynthesis via de novo pathway; AMP from IMP: step 1/2. Its function is as follows. Plays an important role in the de novo pathway of purine nucleotide biosynthesis. Catalyzes the first committed step in the biosynthesis of AMP from IMP. This Saccharopolyspora erythraea (strain ATCC 11635 / DSM 40517 / JCM 4748 / NBRC 13426 / NCIMB 8594 / NRRL 2338) protein is Adenylosuccinate synthetase.